Reading from the N-terminus, the 525-residue chain is Probable feruloyl esterase B-1 (525 aa).

The N-terminal stretch at 1-20 (MMRWFLLIGLASAAATDSSA) is a signal peptide. Cystine bridges form between cysteine 26-cysteine 75, cysteine 61-cysteine 114, cysteine 187-cysteine 442, cysteine 256-cysteine 273, cysteine 282-cysteine 292, and cysteine 502-cysteine 524. Residues asparagine 51, asparagine 80, and asparagine 98 are each glycosylated (N-linked (GlcNAc...) asparagine). The active-site Acyl-ester intermediate is serine 188. Ca(2+) is bound by residues aspartate 257, aspartate 260, alanine 262, and aspartate 264. 3 N-linked (GlcNAc...) asparagine glycosylation sites follow: asparagine 283, asparagine 288, and asparagine 351. Residues aspartate 401 and histidine 441 each act as charge relay system in the active site.

This sequence belongs to the tannase family.

It is found in the secreted. The catalysed reaction is feruloyl-polysaccharide + H2O = ferulate + polysaccharide.. Its function is as follows. Involved in degradation of plant cell walls. Hydrolyzes the feruloyl-arabinose ester bond in arabinoxylans as well as the feruloyl-galactose and feruloyl-arabinose ester bonds in pectin. The sequence is that of Probable feruloyl esterase B-1 (faeB-1) from Neosartorya fischeri (strain ATCC 1020 / DSM 3700 / CBS 544.65 / FGSC A1164 / JCM 1740 / NRRL 181 / WB 181) (Aspergillus fischerianus).